A 108-amino-acid polypeptide reads, in one-letter code: Mitochondrial pyruvate carrier 3 (108 aa).

3 consecutive transmembrane segments (helical) span residues 19–35, 51–67, and 74–90; these read IHFW…IANI, IVIT…STVI, and LFSV…YQLT.

Belongs to the mitochondrial pyruvate carrier (MPC) (TC 2.A.105) family. In terms of tissue distribution, abundant in leaf and particularly in the guard cells.

The protein resides in the mitochondrion. It is found in the mitochondrion inner membrane. Functionally, mediates the uptake of pyruvate into mitochondria. Negatively regulates ABA-induced guard cell signaling and mediates drought stress responses. The polypeptide is Mitochondrial pyruvate carrier 3 (Arabidopsis thaliana (Mouse-ear cress)).